We begin with the raw amino-acid sequence, 818 residues long: MGSDLKARLKAKFSRRSSTSGSVKSGHSHSHGETQLSQRDESRSLASTDNHSRPASVRLDPQSSSNLGAPAPAPDADEVPVRIVISPEDSTATSSSTASTLPSEEVQPQESVTRDPSSQLSAAPKRRAASDGPGNDLHHPMAATTSSLASINENQTLVDASIAASPPATKLPPSVSTSARNTAASSAAAAAAASAAVAVTAAAAAADPDNDDDDDDHLDPLHRGPAASDVLTPAPATAPAPVPATLSASSIARPTGPPRRQSLLPNRQDALIKTLLQAANINEADLTADHLLSINANMVTRKIWVKRAGASATLITINEDDLVDDVRDMILKKYTNSLGRHFDAPDLTLRIFPREERQERLLGPEEPMGRTIDAYFPGGQTVDEALVIDIPTRRTPRPSPRGAVSHPTAVYYAHDTGRPSEAGEGYFPPVGAIPSPNLEVPGAAPNGGPPPPHAIHIQHTGHLPHSISILGTGQVPPIPSPGRSHAYKTRPNRPQLGRTHTSSPTFINGVPSNVGGPPTAHPVHSSFHPRLPPSRTQSNASAESAAIVPPAPPLATPPAPEIPSAIQRISTPPPRIASPRPSSARPARKKIAPAHPVLPAGMLAGGVPPINVLIVEDNPINLKLLEAFVKRLKVRWKTAMNGRDAVKKWKGGGFHLVLMDIQLPIMNGLDATKEIRRLERVNSIGVFSSSASGVFSGSVTSEPEGTEGDIEDKDRLANIELFKSPVIIVALTASSLQSDRHEALAAGCNDFLTKPVNFVWLERKVMEWGCMQALIDFDGWRQWKDFAQDAEENDAAKKAAGVKAKSKKNRLSVTTAAA.

A Response regulatory domain is found at 611 to 769; sequence NVLIVEDNPI…WLERKVMEWG (159 aa). Asp-660 bears the 4-aspartylphosphate mark.

This sequence belongs to the SSK1 family.

The protein localises to the cytoplasm. Two-domain response regulator protein in the two-component signal transduction system of the HOG1 pathway. Modulates stress response, melanin biosynthesis and virulence via its regulation of the phosphorylation of HOG1. The protein is Response regulator SSK1 of Verticillium dahliae (strain VdLs.17 / ATCC MYA-4575 / FGSC 10137) (Verticillium wilt).